Reading from the N-terminus, the 395-residue chain is Elongation factor Tu (395 aa).

Residues 10 to 204 form the tr-type G domain; that stretch reads KPHVNIGTIG…AVDSYIPTPQ (195 aa). The segment at 19–26 is G1; that stretch reads GHVDHGKT. 19–26 lines the GTP pocket; sequence GHVDHGKT. Mg(2+) is bound at residue Thr-26. The tract at residues 60–64 is G2; the sequence is GITIN. Residues 81–84 are G3; the sequence is DCPG. Residues 81–85 and 136–139 contribute to the GTP site; these read DCPGH and NKCD. Residues 136–139 are G4; that stretch reads NKCD. Residues 174-176 are G5; that stretch reads SAL.

Belongs to the TRAFAC class translation factor GTPase superfamily. Classic translation factor GTPase family. EF-Tu/EF-1A subfamily. Monomer.

It is found in the cytoplasm. It catalyses the reaction GTP + H2O = GDP + phosphate + H(+). Functionally, GTP hydrolase that promotes the GTP-dependent binding of aminoacyl-tRNA to the A-site of ribosomes during protein biosynthesis. The polypeptide is Elongation factor Tu (Symbiobacterium thermophilum (strain DSM 24528 / JCM 14929 / IAM 14863 / T)).